The sequence spans 375 residues: Tyrosine--tRNA ligase (375 aa).

Residues Tyr-37, Tyr-168, Gln-172, Asp-175, and Gln-190 each coordinate L-tyrosine. A 'KMSKS' region motif is present at residues 251–255 (KMSKS). Lys-254 contributes to the ATP binding site.

It belongs to the class-I aminoacyl-tRNA synthetase family. TyrS type 4 subfamily. In terms of assembly, homodimer.

The protein localises to the cytoplasm. It carries out the reaction tRNA(Tyr) + L-tyrosine + ATP = L-tyrosyl-tRNA(Tyr) + AMP + diphosphate + H(+). Its function is as follows. Catalyzes the attachment of tyrosine to tRNA(Tyr) in a two-step reaction: tyrosine is first activated by ATP to form Tyr-AMP and then transferred to the acceptor end of tRNA(Tyr). The polypeptide is Tyrosine--tRNA ligase (Thermococcus kodakarensis (strain ATCC BAA-918 / JCM 12380 / KOD1) (Pyrococcus kodakaraensis (strain KOD1))).